Consider the following 180-residue polypeptide: Large ribosomal subunit protein uL6 (180 aa).

The protein belongs to the universal ribosomal protein uL6 family. As to quaternary structure, part of the 50S ribosomal subunit.

In terms of biological role, this protein binds to the 23S rRNA, and is important in its secondary structure. It is located near the subunit interface in the base of the L7/L12 stalk, and near the tRNA binding site of the peptidyltransferase center. The protein is Large ribosomal subunit protein uL6 of Thermoanaerobacter sp. (strain X514).